Reading from the N-terminus, the 1507-residue chain is Paired amphipathic helix protein sin-3 (1507 aa).

Disordered stretches follow at residues 1–26, 228–286, 397–450, 543–569, and 1349–1434; these read MYNPPPGGGGGNNGGDQSQQQPTNNA, PLAL…PPRV, ELGS…MMEE, VDDVPGPSNAPQEIKKPDDIEKKDSSK, and IPRE…MDHL. The span at 16-26 shows a compositional bias: polar residues; the sequence is DQSQQQPTNNA. Basic residues predominate over residues 270-279; sequence RQNRPGRRKK. The 71-residue stretch at 282 to 352 folds into the PAH domain; sequence GPPRVDEALA…LGFNTFLPTG (71 aa). The segment covering 427–438 has biased composition (acidic residues); the sequence is DGIDDEDDEESG. Basic and acidic residues-rich tracts occupy residues 439 to 450 and 555 to 568; these read IEDKNNEEMMEE and EIKKPDDIEKKDSS. 3 stretches are compositionally biased toward acidic residues: residues 1354-1365, 1373-1382, and 1389-1421; these read KDDDDDDDEEGN, NVKDEDDGGD, and PDDDQPPPSNDDGDDEEDEDDEEDGPSGADEPE.

As to quaternary structure, component of the SIN3S complex, which contains at least sin-3, hda-1, athp-1 and mrg-1. Interacts with ztf-11; the interaction is weak. Interacts with cfp-1. Expressed in all ray structural cells including ray 6, 7, 8 and 9 of the male tail. Also expressed in the inner labial neurons, socket cells, the cephalic neurons in the head and the ventral nerve cord.

It localises to the nucleus. Functionally, probable transcriptional repressor required for the deposition of dimethylated 'Lys-9' of histone H3 (H3K9me2) on asynapsed chromosome pairs (both autosomes and sex chromosomes) during meiosis, but this does not seem to solely affect the transcriptional status. Plays a role in ray fusion and patterning in the male tail, and this may be through activity of the histone deacetylase complex (HDAC). The sequence is that of Paired amphipathic helix protein sin-3 from Caenorhabditis elegans.